A 177-amino-acid chain; its full sequence is uncharacterized protein (177 aa).

Positions L10–E177 constitute an N-acetyltransferase domain.

Belongs to the acetyltransferase family.

This is an uncharacterized protein from Bacillus subtilis (strain 168).